The sequence spans 365 residues: MFEINPVKNRIQDLAERSAVLRGYLDYDAKKERLEEVNAELEQPDVWNEPERAQALGKERSSLEAIVDTIDQLAQGLEDVTGLLELAVEEDDEDTFNETSAELDVLENKLGQLEFRRMFSGEYDSADCYLDIQAGSGGTEAQDWASMLVRMYLRWAEAKGFKTEIIEESDGDVAGTKSATIKIIGDYAFGWLRTETGVHRLVRKSPFDSGGRRHTSFSSAFVYPEVDDDIDIEINPADLRIDVYRASGAGGQHVNRTESAVRITHLPTNIVTQCQNDRSQHKNKDQAMKQLKAKLYEFEMQKKNAEKQVMEDNKSDIGWGSQIRSYVLDDSRIKDLRTGVETRNTQAVLDGDLDKFIEASLKAGL.

Gln252 carries the N5-methylglutamine modification.

This sequence belongs to the prokaryotic/mitochondrial release factor family. Methylated by PrmC. Methylation increases the termination efficiency of RF2.

The protein localises to the cytoplasm. Peptide chain release factor 2 directs the termination of translation in response to the peptide chain termination codons UGA and UAA. The polypeptide is Peptide chain release factor 2 (Pectobacterium atrosepticum (strain SCRI 1043 / ATCC BAA-672) (Erwinia carotovora subsp. atroseptica)).